Reading from the N-terminus, the 57-residue chain is Large ribosomal subunit protein bL32 (57 aa).

The protein belongs to the bacterial ribosomal protein bL32 family.

The protein is Large ribosomal subunit protein bL32 of Staphylococcus epidermidis (strain ATCC 35984 / DSM 28319 / BCRC 17069 / CCUG 31568 / BM 3577 / RP62A).